A 407-amino-acid chain; its full sequence is Histone-lysine N-methyltransferase SUV39H2 (407 aa).

The region spanning 43–101 is the Chromo domain; that stretch reads YEVEYLCDYKVEEGKEYYLVKWKGWPESSNTWEPQKNLKCPKLLENFLSDKDEYLSRMK. Positions 185-243 constitute a Pre-SET domain; it reads TGCECSDCPAEKCCPKEAGFILAYNKQKKLKIQPGLPIYECNSFCRCGPDCPNRIVQKG. Residues Cys187, Cys189, Cys192, Cys197, Cys198, Cys225, Cys229, Cys231, and Cys235 each contribute to the Zn(2+) site. In terms of domain architecture, SET spans 246–369; it reads YSLCIFRTNN…AGEELTFDYQ (124 aa). S-adenosyl-L-methionine-binding positions include 257–259, Tyr300, and 326–327; these read RGW and NH. Zn(2+)-binding residues include Cys329, Cys395, Cys397, and Cys402. A Post-SET domain is found at 391 to 407; that stretch reads IRTVCKCGAVCCRGYLN.

Belongs to the class V-like SAM-binding methyltransferase superfamily. Histone-lysine methyltransferase family. Suvar3-9 subfamily.

Its subcellular location is the nucleus. It is found in the chromosome. It localises to the centromere. It carries out the reaction L-lysyl(9)-[histone H3] + 3 S-adenosyl-L-methionine = N(6),N(6),N(6)-trimethyl-L-lysyl(9)-[histone H3] + 3 S-adenosyl-L-homocysteine + 3 H(+). Its function is as follows. Histone methyltransferase that specifically trimethylates 'Lys-9' of histone H3 using monomethylated H3 'Lys-9' as substrate. H3 'Lys-9' trimethylation represents a specific tag for epigenetic transcriptional repression by recruiting HP1 (CBX1, CBX3 and/or CBX5) proteins to methylated histones. Mainly functions in heterochromatin regions, thereby playing a central role in the establishment of constitutive heterochromatin at pericentric and telomere regions. H3 'Lys-9' trimethylation is also required to direct DNA methylation at pericentric repeats. SUV39H1 is targeted to histone H3 via its interaction with RB1 and is involved in many processes. This Gallus gallus (Chicken) protein is Histone-lysine N-methyltransferase SUV39H2 (SUV39H2).